Here is a 205-residue protein sequence, read N- to C-terminus: MTKRSEAKYKIDRRMGQNIWGRPKSPVNRREYGPGQHGQRRKGKLSDFGVQLRAKQKLKGYYANISERQFHAIYVEATRLKGDSGENLIGLLERRLDTVVYRAKFVATMFAARQFINHGHVKVNGKRVNISSYKVKVGDLIEVKESSKQLAFVLEASQLGERDTPDYVEVDHSKMTAKFIRVPHLSDVPFAVQMEPHLIVEFYSR.

The interval 18-45 (NIWGRPKSPVNRREYGPGQHGQRRKGKL) is disordered. The S4 RNA-binding domain occupies 94-157 (RRLDTVVYRA…KQLAFVLEAS (64 aa)).

It belongs to the universal ribosomal protein uS4 family. Part of the 30S ribosomal subunit. Contacts protein S5. The interaction surface between S4 and S5 is involved in control of translational fidelity.

Functionally, one of the primary rRNA binding proteins, it binds directly to 16S rRNA where it nucleates assembly of the body of the 30S subunit. In terms of biological role, with S5 and S12 plays an important role in translational accuracy. The protein is Small ribosomal subunit protein uS4 of Rhodopseudomonas palustris (strain BisA53).